The chain runs to 626 residues: Endo-1,3(4)-beta-glucanase xgeA (626 aa).

Residues 1–25 (MSSSLMRRVGSLAASAIIFPGIAHA) form the signal peptide. The GH16 domain maps to 33 to 286 (ESWEGEKILN…WAGGVFGDSG (254 aa)). N-linked (GlcNAc...) asparagine glycosylation occurs at N61. The active-site Nucleophile is the E142. The active-site Proton donor is E147. Residues 477 to 494 (ASTDAAAATTPAAEPHPS) show a composition bias toward low complexity. The interval 477–533 (ASTDAAAATTPAAEPHPSNAETPADSKSSADAVTAQATKTTIAVNTPNPATDSASSV) is disordered. The segment covering 495-533 (NAETPADSKSSADAVTAQATKTTIAVNTPNPATDSASSV) has biased composition (polar residues). G603 carries the GPI-anchor amidated glycine lipid modification. The propeptide at 604–626 (VGSKVSISASVAIAAFVMLLLVN) is removed in mature form.

This sequence belongs to the glycosyl hydrolase 16 family.

The protein resides in the cell membrane. The enzyme catalyses Endohydrolysis of (1-&gt;3)- or (1-&gt;4)-linkages in beta-D-glucans when the glucose residue whose reducing group is involved in the linkage to be hydrolyzed is itself substituted at C-3.. In terms of biological role, mixed-linked glucanase involved in the degradation of complex natural cellulosic substrates. Active on laminarin. lichenan, soluble carboxymethyl cellulose but not on pustulan. The sequence is that of Endo-1,3(4)-beta-glucanase xgeA (xgeA) from Emericella nidulans (strain FGSC A4 / ATCC 38163 / CBS 112.46 / NRRL 194 / M139) (Aspergillus nidulans).